Here is a 463-residue protein sequence, read N- to C-terminus: Protein translocase subunit SecY (463 aa).

At 1–20 (MGFMDFLAKMGENLPAVSKP) the chain is on the cytoplasmic side. Residues 21–47 (KDKPTLTRKLLWTFIGLIVYLLMASIP) traverse the membrane as a helical segment. Over 48-60 (LYGVTSSNSFLSN) the chain is Extracellular. An intramembrane region (helical) is located at residues 61–68 (FLAQQIIF). A discontinuously helical membrane pass occupies residues 61–89 (FLAQQIIFASSQGTLAQLGIGPVITSGLI). An intramembrane segment occupies 69–80 (ASSQGTLAQLGI). The segment at residues 81–89 (GPVITSGLI) is an intramembrane region (helical). Residues 90–110 (MQILVGSKLINVDLTTQEGKS) lie on the Cytoplasmic side of the membrane. The chain crosses the membrane as a helical span at residues 111 to 134 (KFTQAEKALALIFIIVESSLFGYV). Over 135-142 (FTRATSNI) the chain is Extracellular. The chain crosses the membrane as a helical span at residues 143–167 (LLPIIVVVQLIIASYIILLLDEMIQ). The Cytoplasmic portion of the chain corresponds to 168–174 (KGWGLGS). A helical transmembrane segment spans residues 175–193 (GVSLFIMAGIMKVIFWNMF). Residues 194-236 (GIVSVQSQNLPVGFFPLLVSYITSGRNLQEIVLNTSSTTPYQP) are Extracellular-facing. The chain crosses the membrane as a helical span at residues 237–258 (DLIGLIATVGLTILIVYLVNTN). At 259–283 (IYIPVTTQRLRGIRTTVPLNFLYVS) the chain is on the cytoplasmic side. Residues 284–305 (SIPVIFVSVLGADIQLFASLAN) form a helical membrane-spanning segment. Residues 306–341 (SISNSASGILTDIANAFFFPPQGVPHSVYALVVDPV) lie on the Extracellular side of the membrane. A helical transmembrane segment spans residues 342-361 (GAAIYAAVFIVLSIVFGMLW). The Cytoplasmic segment spans residues 362-404 (IDVAGLDPKTQAEQMIRSGIEIPGMRTNPRIIEGILSKYIYAL). Residues 405 to 423 (GFFSSLIVGLIAVVATFLG) traverse the membrane as a helical segment. Topologically, residues 424–426 (TYG) are extracellular. Residues 427-441 (TGVGLLLAITIAMQY) traverse the membrane as a helical segment. Topologically, residues 442–463 (YNLLAYERTLEMYPLLKRIVGE) are cytoplasmic.

This sequence belongs to the SecY/SEC61-alpha family. In terms of assembly, component of the Sec protein translocase complex. Heterotrimer consisting of alpha (SecY), beta (SecG) and gamma (SecE) subunits. The heterotrimers can form oligomers, although 1 heterotrimer is thought to be able to translocate proteins. Interacts with the ribosome. May interact with SecDF, and other proteins may be involved.

It localises to the cell membrane. The central subunit of the protein translocation channel SecYEG. Consists of two halves formed by TMs 1-5 and 6-10. These two domains form a lateral gate at the front which open onto the bilayer between TMs 2 and 7, and are clamped together by SecE at the back. The channel is closed by both a pore ring composed of hydrophobic SecY resides and a short helix (helix 2A) on the extracellular side of the membrane which forms a plug. The plug probably moves laterally to allow the channel to open. The ring and the pore may move independently. This is Protein translocase subunit SecY from Sulfolobus acidocaldarius (strain ATCC 33909 / DSM 639 / JCM 8929 / NBRC 15157 / NCIMB 11770).